Consider the following 95-residue polypeptide: Acylphosphatase (95 aa).

In terms of domain architecture, Acylphosphatase-like spans Arg-8 to Lys-95. Residues Arg-23 and Asn-41 contribute to the active site.

This sequence belongs to the acylphosphatase family.

The catalysed reaction is an acyl phosphate + H2O = a carboxylate + phosphate + H(+). The sequence is that of Acylphosphatase (acyP) from Leptospira interrogans serogroup Icterohaemorrhagiae serovar copenhageni (strain Fiocruz L1-130).